Here is a 626-residue protein sequence, read N- to C-terminus: Glyco-Gag protein (626 aa).

The Cytoplasmic portion of the chain corresponds to 1–66 (LGDVPGTSGA…SVWNRSRAAR (66 aa)). Residues 67-86 (LVCCSIVLCCLCLTVFLYLS) traverse the membrane as a helical segment. The Extracellular portion of the chain corresponds to 87-626 (ENMGQAVTTP…PQASLLTLDD (540 aa)). Residue Asn-113 is glycosylated (N-linked (GlcNAc...) asparagine; by host). Composition is skewed to pro residues over residues 198–212 (PPSA…PLST) and 249–261 (DPPP…PPSP). 2 disordered regions span residues 198-306 (PPSA…FPLR) and 522-626 (RETP…TLDD). 2 stretches are compositionally biased toward basic and acidic residues: residues 522 to 554 (RETP…EKER) and 574 to 607 (RQDR…DCPK). A coiled-coil region spans residues 526–566 (EEREERIRRETEEKEERRRAEDVQREKERDRRRHREMSKLL). The CCHC-type zinc-finger motif lies at 590–607 (DQCAYCKEKGHWARDCPK).

In terms of processing, glycosylated by host. Post-translationally, cleaved by host near the middle of the molecule, releasing the c-terminal half containing capsid and nucleoprotein domains op GAG.

Its subcellular location is the host cell membrane. Functionally, plays a role in viral particle release. Presumably acts by facilitating the fission of the virion bud at the cell surface. May prevent the antiviral activity of murine APOBEC3. The sequence is that of Glyco-Gag protein from Mus musculus (Mouse).